Reading from the N-terminus, the 222-residue chain is Peptidyl-prolyl cis-trans isomerase FKBP7 (222 aa).

The signal sequence occupies residues 1–23 (MPKTMHFLFRFIVFFYLWGLFTA). An N-linked (GlcNAc...) asparagine glycan is attached at asparagine 45. One can recognise a PPIase FKBP-type domain in the interval 53–145 (GDLLNAHYDG…IFEIELYAVT (93 aa)). EF-hand domains follow at residues 145 to 180 (TKGPRSTETFKQIDMDSDRQLSKAEINLYLQREFEK) and 189 to 222 (YQDAVLEDIFKKNDHDGDGFISPKEYNVYQHDEL). Residues aspartate 158, aspartate 160, aspartate 162, glutamine 164, glutamate 169, aspartate 202, aspartate 204, aspartate 206, and glutamate 213 each coordinate Ca(2+). Residues 219 to 222 (HDEL) carry the Prevents secretion from ER motif.

In terms of processing, glycosylated.

Its subcellular location is the endoplasmic reticulum lumen. It carries out the reaction [protein]-peptidylproline (omega=180) = [protein]-peptidylproline (omega=0). In terms of biological role, PPIases accelerate the folding of proteins during protein synthesis. The protein is Peptidyl-prolyl cis-trans isomerase FKBP7 (FKBP7) of Pongo abelii (Sumatran orangutan).